The primary structure comprises 126 residues: Glycerol dehydrogenase small subunit (126 aa).

4 consecutive transmembrane segments (helical) span residues 13–33 (WLTL…VIAG), 41–61 (GSVY…FMLM), 67–87 (AFLY…EVGF), and 92–112 (LLPR…TIPV).

The protein localises to the cell membrane. It catalyses the reaction glycerol + A = dihydroxyacetone + AH2. In terms of biological role, catalyzes the oxidation of glycerol to glycerone. Also acts, more slowly, on a number of other polyols including D-sorbitol, D-arabinitol, D-mannitol, meso-erythritol, adonitol and propylene glycol. This is Glycerol dehydrogenase small subunit (sldB) from Gluconobacter oxydans (strain 621H) (Gluconobacter suboxydans).